The sequence spans 168 residues: uncharacterized protein (168 aa).

The chain crosses the membrane as a helical span at residues leucine 23 to valine 47.

It localises to the membrane. This is an uncharacterized protein from Haemophilus influenzae (strain ATCC 51907 / DSM 11121 / KW20 / Rd).